The following is a 528-amino-acid chain: J domain-containing protein APJ1 (528 aa).

Residues asparagine 4–threonine 73 enclose the J domain. The segment at glycine 193–arginine 274 adopts a CR-type zinc-finger fold. CXXCXGXG motif repeat units lie at residues cysteine 206 to glycine 213, cysteine 218 to glycine 225, cysteine 246 to glycine 253, and cysteine 262 to glycine 269. The span at asparagine 485–glutamate 499 shows a compositional bias: basic and acidic residues. The disordered stretch occupies residues asparagine 485–tyrosine 528.

Its subcellular location is the cytoplasm. The protein resides in the nucleus. Its function is as follows. Putative chaperone involved in protein folding. Interferes with propagation of [PSI+] prion when overproduced. This Saccharomyces cerevisiae (strain ATCC 204508 / S288c) (Baker's yeast) protein is J domain-containing protein APJ1 (APJ1).